The following is a 95-amino-acid chain: uncharacterized protein (95 aa).

This is an uncharacterized protein from Acheta domesticus (House cricket).